We begin with the raw amino-acid sequence, 221 residues long: DNA mismatch repair protein MutH (221 aa).

This sequence belongs to the MutH family.

It is found in the cytoplasm. Sequence-specific endonuclease that cleaves unmethylated GATC sequences. It is involved in DNA mismatch repair. The polypeptide is DNA mismatch repair protein MutH (Vibrio cholerae serotype O1 (strain ATCC 39315 / El Tor Inaba N16961)).